Consider the following 92-residue polypeptide: Probable Fe(2+)-trafficking protein (92 aa).

The protein belongs to the Fe(2+)-trafficking protein family.

Could be a mediator in iron transactions between iron acquisition and iron-requiring processes, such as synthesis and/or repair of Fe-S clusters in biosynthetic enzymes. In Shewanella woodyi (strain ATCC 51908 / MS32), this protein is Probable Fe(2+)-trafficking protein.